We begin with the raw amino-acid sequence, 432 residues long: Ribosome biogenesis protein WDR12 homolog (432 aa).

The segment at 13–97 is ubiquitin-like (UBL) domain; the sequence is LQIRLVALNK…ESVIEVVYFQ (85 aa). 7 WD repeats span residues 109-146, 148-190, 197-236, 265-303, 305-345, 352-392, and 396-432; these read LHSDWIKSVRSKDDCILAGSLDGTARIWNMAGEEYAIF, GHES…KSVE, GHTQAVNAVTVNQSKTKICSVSSDKMIKIWSTDCSRKDDD, GHTDGIDAVVWPKEAEIITAGWDHRIKIWDTEVGVNKSD, NVNK…DQTV, SHKN…APLY, and GHEDKVLAVDWSEPQYIVSGGADNRIQIYQREVAQRS.

This sequence belongs to the WD repeat WDR12/YTM1 family.

It is found in the nucleus. The protein resides in the nucleolus. It localises to the nucleoplasm. Its function is as follows. Required for maturation of ribosomal RNAs and formation of the large ribosomal subunit. The sequence is that of Ribosome biogenesis protein WDR12 homolog from Trichoplax adhaerens (Trichoplax reptans).